The following is a 974-amino-acid chain: Collagen alpha-1(I) chain (974 aa).

Over residues Gly-1 to Arg-14 the composition is skewed to low complexity. The tract at residues Gly-1–Pro-974 is disordered. A 4-hydroxyproline mark is found at Pro-17, Pro-20, Pro-23, Pro-32, Pro-35, Pro-38, Pro-53, Pro-68, Pro-75, and Pro-81. Low complexity predominate over residues Pro-25 to Met-44. Residues Asn-56 to Gly-73 are compositionally biased toward basic and acidic residues. Lys-84 carries the post-translational modification 5-hydroxylysine; alternate. Residue Lys-84 is glycosylated (O-linked (Gal...) hydroxylysine; alternate). At Ser-90 the chain carries Phosphoserine. The segment covering Asp-98–Asn-114 has biased composition (low complexity). Residues Pro-108, Pro-111, Pro-117, Pro-126, Pro-132, Pro-153, Pro-162, Pro-165, Pro-192, Pro-195, Pro-207, Pro-213, Pro-222, Pro-228, Pro-231, and Pro-245 each carry the 4-hydroxyproline modification. The span at Pro-132–Ala-150 shows a compositional bias: low complexity. The span at Pro-152–Phe-164 shows a compositional bias: pro residues. Low complexity predominate over residues Ala-198 to Pro-228. Lys-248 is modified (5-hydroxylysine). Residues Pro-254, Pro-257, Pro-269, Pro-278, Pro-293, Pro-299, Pro-308, and Pro-314 each carry the 4-hydroxyproline modification. The span at Gly-303–Gly-312 shows a compositional bias: gly residues. Lys-323 carries the post-translational modification 5-hydroxylysine. 24 positions are modified to 4-hydroxyproline: Pro-328, Pro-337, Pro-343, Pro-349, Pro-358, Pro-361, Pro-370, Pro-379, Pro-385, Pro-397, Pro-406, Pro-415, Pro-418, Pro-436, Pro-454, Pro-460, Pro-466, Pro-472, Pro-484, Pro-493, Pro-505, Pro-520, Pro-527, and Pro-536. The span at Lys-352–Arg-378 shows a compositional bias: low complexity. The span at Ala-387 to Pro-406 shows a compositional bias: low complexity. Low complexity predominate over residues Ala-504–Pro-517. Lys-548 carries the 5-hydroxylysine modification. 4-hydroxyproline is present on residues Pro-554, Pro-569, and Pro-575. Positions Ser-581–Ala-595 are enriched in low complexity. The residue at position 584 (Ser-584) is a Phosphoserine. 8 positions are modified to 4-hydroxyproline: Pro-596, Pro-602, Pro-605, Pro-614, Pro-620, Pro-638, Pro-647, and Pro-656. Over residues Ala-608–Ala-635 the composition is skewed to low complexity. Residues Pro-637–Pro-649 show a composition bias toward pro residues. 5-hydroxylysine is present on Lys-659. A compositionally biased stretch (low complexity) spans Ser-664 to Val-680. 4-hydroxyproline is present on residues Pro-668 and Pro-674. Position 682 is a 3-hydroxyproline (Pro-682). A 4-hydroxyproline mark is found at Pro-683, Pro-692, Pro-695, Pro-716, Pro-725, Pro-733, Pro-742, Pro-760, Pro-769, Pro-772, Pro-778, Pro-793, Pro-799, Pro-805, Pro-814, and Pro-820. A compositionally biased stretch (low complexity) spans Glu-709 to Glu-718. Low complexity predominate over residues Lys-730–Pro-742. The span at Pro-792–Ala-802 shows a compositional bias: pro residues. Residues Pro-804–Pro-826 show a composition bias toward low complexity. Residues Pro-828–Val-844 show a composition bias toward pro residues. At Lys-829 the chain carries 5-hydroxylysine. 3 positions are modified to 4-hydroxyproline: Pro-832, Pro-835, and Pro-838. Positions Ala-865 to Pro-879 are enriched in low complexity. Residues Arg-880–Gly-894 are compositionally biased toward basic and acidic residues. Lys-883 is subject to 5-hydroxylysine. 4 positions are modified to 4-hydroxyproline: Pro-905, Pro-908, Pro-926, and Pro-941. Over residues Pro-908–Pro-941 the composition is skewed to low complexity. Residue Pro-946 is modified to 3-hydroxyproline. Pro-947 carries the 4-hydroxyproline modification. Pro residues predominate over residues Val-959–Pro-974. 3-hydroxyproline is present on Pro-961. Pro-962 bears the 4-hydroxyproline mark. Pro-964 is subject to 3-hydroxyproline. Residue Pro-965 is modified to 4-hydroxyproline. Pro-967 carries the post-translational modification 3-hydroxyproline. 4-hydroxyproline occurs at positions 968, 971, and 974.

It belongs to the fibrillar collagen family. Trimers of one alpha 2(I) and two alpha 1(I) chains. Contains mostly 4-hydroxyproline. Proline residues at the third position of the tripeptide repeating unit (G-X-Y) are hydroxylated in some or all of the chains. Post-translationally, contains 3-hydroxyproline at a few sites. This modification occurs on the first proline residue in the sequence motif Gly-Pro-Hyp, where Hyp is 4-hydroxyproline. In terms of processing, lysine residues at the third position of the tripeptide repeating unit (G-X-Y) are 5-hydroxylated in some or all of the chains. O-glycosylated on hydroxylated lysine residues. The O-linked glycan consists of a Glc-Gal disaccharide. Expressed in bones.

It localises to the secreted. The protein localises to the extracellular space. It is found in the extracellular matrix. Type I collagen is a member of group I collagen (fibrillar forming collagen). This chain is Collagen alpha-1(I) chain, found in Scelidodon sp. (strain SLP-2019) (South American ground sloth).